The chain runs to 954 residues: Patched domain-containing protein 3 (954 aa).

Residues 1-20 (MPWVEPKPRPGPEQKPKLTK) show a composition bias toward basic and acidic residues. Positions 1–103 (MPWVEPKPRP…APLPEEETPE (103 aa)) are disordered. Residues 42 to 57 (QPPPGPLAPPKSPEPS) are compositionally biased toward pro residues. The span at 90-102 (ELDDAPLPEEETP) shows a compositional bias: acidic residues. Residues 139 to 159 (WIFLLAPLMLTAALGTGFLYL) traverse the membrane as a helical segment. Residues Asn192, Asn275, and Asn279 are each glycosylated (N-linked (GlcNAc...) asparagine). 7 helical membrane passes run 297 to 317 (LTGF…QLLL), 383 to 403 (VIPV…TSCF), 423 to 443 (FLAV…FVII), 447 to 467 (SPFL…SAWH), 486 to 506 (AAVS…TGIM), 520 to 540 (GMTL…FMAL), and 603 to 623 (YFVV…CFHV). One can recognise an SSD domain in the interval 383–540 (VIPVFHLAYI…ITCFGAFMAL (158 aa)). Asn678, Asn692, and Asn737 each carry an N-linked (GlcNAc...) asparagine glycan. The next 5 membrane-spanning stretches (helical) occupy residues 804–824 (VLVA…YPLC), 826–846 (LWVT…MAFW), 858–878 (LVIC…AFVS), 894–914 (LLGY…CVLA), and 927–947 (IMFL…PVFL).

The protein belongs to the patched family. As to expression, expressed in germ cells of the testis (at protein level). Detected in blood lymph, colon, small intestine, ovary, testis, prostate, thymus and spleen with highest levels in testis.

Its subcellular location is the cell projection. It localises to the cilium. The protein localises to the flagellum membrane. The protein resides in the endoplasmic reticulum membrane. In terms of biological role, may play a role in sperm development or sperm function. However, does not appear to have an essential role in spermatogenesis or male fertility. The sequence is that of Patched domain-containing protein 3 (PTCHD3) from Homo sapiens (Human).